Here is a 625-residue protein sequence, read N- to C-terminus: Somatic embryogenesis receptor kinase 1 (625 aa).

The N-terminal stretch at 1-26 (MESSYVVFILLSLILLPNHSLWLASA) is a signal peptide. Residues 27–238 (NLEGDALHTL…STPSGYGITG (212 aa)) lie on the Extracellular side of the membrane. A disulfide bridge links Cys-58 with Cys-65. Leucine-rich repeat receptor-like protein kinase binding regions lie at residues 59–78 (TWFH…DLGN) and 97–102 (YLELYS). 61 to 62 (FH) contributes to the brassinolide binding site. LRR repeat units lie at residues 92-116 (LKNL…LGNL), 118-140 (NLVS…LGKL), 141-164 (SKLR…LTNI), and 165-189 (TTLQ…SFSL). N-linked (GlcNAc...) asparagine glycosylation is found at Asn-104 and Asn-115. Leucine-rich repeat receptor-like protein kinase binding regions lie at residues 123–126 (DLYL) and 145–147 (FLR). Asn-150, Asn-163, and Asn-184 each carry an N-linked (GlcNAc...) asparagine glycan. The segment at 171-194 (DLSNNRLSGSVPDNGSFSLFTPIS) is leucine-rich repeat receptor-like protein kinase binding. The cysteines at positions 202 and 210 are disulfide-linked. Residues 239-259 (AIAGGVAAGAALLFAAPAIAF) form a helical membrane-spanning segment. Residues 260–625 (AWWRRRKPLD…LHAVELSGPR (366 aa)) lie on the Cytoplasmic side of the membrane. Phosphoserine is present on residues Ser-291, Ser-299, and Ser-303. A Protein kinase domain is found at 302-589 (FSNKNILGRG…GLAEKWDEWQ (288 aa)). 308 to 316 (LGRGGFGKV) lines the ATP pocket. Residue Thr-325 is modified to Phosphothreonine. An ATP-binding site is contributed by Lys-330. Phosphothreonine occurs at positions 337 and 346. Phosphoserine is present on residues Ser-352, Ser-383, Ser-386, and Ser-394. Residue Thr-402 is modified to Phosphothreonine. Position 415 is a phosphoserine (Ser-415). Asp-429 acts as the Proton acceptor in catalysis. Phosphotyrosine is present on Tyr-456. A phosphothreonine mark is found at Thr-459, Thr-462, Thr-463, and Thr-468. Phosphotyrosine is present on Tyr-476. Ser-478 is modified (phosphoserine). Thr-479 is subject to Phosphothreonine. Ser-483 is subject to Phosphoserine. Phosphothreonine is present on Thr-541. Position 543 is a phosphotyrosine (Tyr-543). A Phosphothreonine modification is found at Thr-559. Ser-606 and Ser-612 each carry phosphoserine. Thr-613 carries the post-translational modification Phosphothreonine. Position 614 is a phosphotyrosine (Tyr-614). Ser-622 carries the phosphoserine modification.

This sequence belongs to the protein kinase superfamily. Ser/Thr protein kinase family. In terms of assembly, monomer, homo- and heterodimer. Interacts with KAPP, CDC48A, GRF6 or GRF7, SERK2, BRI1 and SERK3/BAK1 to form the SERK1 signaling complex. Bind to BRI1 in a brassinolide-dependent manner. Heterodimer with PSKR1. Interacts with the EF-Tu receptor EFR and FLS2 in a specific ligand-induced manner. Interacts with ERECTA in a EPF2-induced manner. Interacts with ERL1 in a EPF1-induced manner. Interacts with TMM. In the presence of the signal peptide RGF1, interacts with RGI1/RGFR4/RCH2, RGI2/RGFR3/RCH1, RGI3/RGFR1, RGI4/RGFR2/SKM2 and RGI5/RGFR5. Requires Mg(2+) as cofactor. Glycosylated. Important for targeting to the plasma membrane. In terms of processing, intermolecular autophosphorylation. The catalytic activity of SERK1 depends on the presence of a phosphorylated Thr residue in SERK1. The phosphorylation is induced by brassinosteroids. Transphosphorylation by BRI1 occurs only on Ser-299 and Thr-462. Dephosphorylation of threonine residues by the kinase-associated protein phosphatase (KAPP) is involved in SERK1 endocytosis. As to expression, expressed in flowers, tapetum, developing microspores, all cells of the embryo sac, provascular strands and developing vascular bundles. Low expression in adult vascular tissue. Detected in root meristem.

The protein resides in the cell membrane. It is found in the endoplasmic reticulum membrane. It carries out the reaction L-seryl-[protein] + ATP = O-phospho-L-seryl-[protein] + ADP + H(+). The catalysed reaction is L-threonyl-[protein] + ATP = O-phospho-L-threonyl-[protein] + ADP + H(+). The enzyme catalyses L-tyrosyl-[protein] + ATP = O-phospho-L-tyrosyl-[protein] + ADP + H(+). Its activity is regulated as follows. Inhibited by manganese. Its function is as follows. Dual specificity kinase acting on both serine/threonine- and tyrosine-containing substrates. Phosphorylates BRI1 on 'Ser-887' and CDC48 on at least one threonine residue and on 'Ser-41'. Confers embryogenic competence. Acts redundantly with SERK2 as a control point for sporophytic development controlling male gametophyte production. Involved in the brassinolide signaling pathway. Probably required during small peptide (e.g. RGF1) signaling. Involved in the perception of phytosulfokine and subsequent signal transduction. Acts as a RLK5 coreceptor and promotes high-affinity IDA sensing, thus being a positive regulator of floral abscission. This is Somatic embryogenesis receptor kinase 1 from Arabidopsis thaliana (Mouse-ear cress).